Reading from the N-terminus, the 652-residue chain is ATP-binding cassette sub-family G member 5 (652 aa).

The tract at residues 1–25 is disordered; the sequence is MGELPFLSPEGARGPHINRGSLSSL. Over 1–384 the chain is Cytoplasmic; sequence MGELPFLSPE…RVTRNLMRNK (384 aa). Residues 39-294 enclose the ABC transporter domain; sequence LGVLHVSYSV…FNNCGYPCPE (256 aa). Cys-61 is lipidated: S-palmitoyl cysteine. Position 87-94 (87-94) interacts with ATP; it reads GSSGSGKT. A helical transmembrane segment spans residues 385–405; the sequence is QAVIMRLVQNLIMGLFLIFYL. In terms of domain architecture, ABC transmembrane type-2 spans 389–646; the sequence is MRLVQNLIMG…ILGIVIFKVR (258 aa). The Extracellular portion of the chain corresponds to 406-422; the sequence is LRVQNNTLKGAVQDRVG. Asn-410 carries N-linked (GlcNAc...) asparagine glycosylation. Residues 423 to 443 form a helical membrane-spanning segment; the sequence is LLYQLVGATPYTGMLNAVNLF. Topologically, residues 444–468 are cytoplasmic; sequence PMLRAVSDQESQDGLYHKWQMLLAY. A helical membrane pass occupies residues 469–490; sequence VLHVLPFSVIATVIFSSVCYWT. The Extracellular portion of the chain corresponds to 491–501; it reads LGLYPEVARFG. The chain crosses the membrane as a helical span at residues 502 to 522; sequence YFSAALLAPHLIGEFLTLVLL. Residues 523-529 lie on the Cytoplasmic side of the membrane; that stretch reads GIVQNPN. Residues 530-550 traverse the membrane as a helical segment; it reads IVNSIVALLSISGLLIGSGFI. The Extracellular portion of the chain corresponds to 551–624; sequence RNIQEMPIPL…PGATSRFTAN (74 aa). N-linked (GlcNAc...) asparagine glycans are attached at residues Asn-585 and Asn-592. Residues 625 to 645 traverse the membrane as a helical segment; that stretch reads FLILYGFIPALVILGIVIFKV. Over 646-652 the chain is Cytoplasmic; it reads RDYLISR.

Belongs to the ABC transporter superfamily. ABCG family. Eye pigment precursor importer (TC 3.A.1.204) subfamily. As to quaternary structure, heterodimer with ABCG8. Requires Mg(2+) as cofactor. Post-translationally, N-glycosylated. N-glycosylation is important for efficient export out of the endoplasmic reticulum. In terms of tissue distribution, detected in liver and jejunum. Detected on enterocyte villi (at protein level). Expressed in jejunum, ileum and, at lower level, in the liver.

It is found in the cell membrane. It localises to the apical cell membrane. The catalysed reaction is cholesterol(in) + ATP + H2O = cholesterol(out) + ADP + phosphate + H(+). The enzyme catalyses sitosterol(in) + ATP + H2O = sitosterol(out) + ADP + phosphate + H(+). With respect to regulation, cholesterol transport is inhibited by vanadate and by beryllium fluoride. In terms of biological role, ABCG5 and ABCG8 form an obligate heterodimer that mediates Mg(2+)- and ATP-dependent sterol transport across the cell membrane. Plays an essential role in the selective transport of dietary plant sterols and cholesterol in and out of the enterocytes and in the selective sterol excretion by the liver into bile. Required for normal sterol homeostasis. The heterodimer with ABCG8 has ATPase activity. This is ATP-binding cassette sub-family G member 5 from Mus musculus (Mouse).